Reading from the N-terminus, the 646-residue chain is Peptidylprolyl isomerase domain and WD repeat-containing protein 1 (646 aa).

The tract at residues 1–30 (MAAESGSDFQQRRRRRRDPEEPEKTELSER) is disordered. A2 is subject to N-acetylalanine. A compositionally biased stretch (basic and acidic residues) spans 17–30 (RDPEEPEKTELSER). WD repeat units lie at residues 80-118 (ASMY…FWKK), 124-162 (EFVK…VFDV), 168-208 (INML…IYDG), 213-252 (QPLH…YWTG), 271-309 (TDLY…IFRF), 345-386 (AVER…VETN), and 401-453 (MQLA…MFTK). Positions 455–478 (EPEDTKSADSDRDVFNEKPSKEEV) are enriched in basic and acidic residues. The segment at 455–490 (EPEDTKSADSDRDVFNEKPSKEEVMAATQAEGPKRV) is disordered. Positions 490–645 (VSDSAIIHTS…EDVSIINITV (156 aa)) constitute a PPIase cyclophilin-type domain.

This sequence belongs to the cyclophilin-type PPIase family. PPIL1 subfamily. As to quaternary structure, identified in the spliceosome C complex.

The protein resides in the nucleus. The enzyme catalyses [protein]-peptidylproline (omega=180) = [protein]-peptidylproline (omega=0). Inhibited by cyclosporin A (CsA). Functionally, PPIase that catalyzes the cis-trans isomerization of proline imidic peptide bonds in oligopeptides and may therefore assist protein folding. May be involved in pre-mRNA splicing. This chain is Peptidylprolyl isomerase domain and WD repeat-containing protein 1, found in Homo sapiens (Human).